The primary structure comprises 392 residues: Phosphoglycerate kinase (392 aa).

Residues 26 to 28, Arg41, 64 to 67, Arg118, and Arg151 each bind substrate; these read DLN and HLGR. Residues Lys202, Glu319, and 345–348 contribute to the ATP site; that span reads GGDT.

Belongs to the phosphoglycerate kinase family. In terms of assembly, monomer.

The protein localises to the cytoplasm. The catalysed reaction is (2R)-3-phosphoglycerate + ATP = (2R)-3-phospho-glyceroyl phosphate + ADP. It functions in the pathway carbohydrate degradation; glycolysis; pyruvate from D-glyceraldehyde 3-phosphate: step 2/5. The chain is Phosphoglycerate kinase from Photobacterium profundum (strain SS9).